The following is a 117-amino-acid chain: Large-conductance mechanosensitive channel (117 aa).

3 helical membrane passes run 7–27 (EFAL…GAAF), 30–50 (IVTS…FGSV), and 64–84 (GLFI…FIFV).

Belongs to the MscL family. As to quaternary structure, homopentamer.

The protein localises to the cell membrane. In terms of biological role, channel that opens in response to stretch forces in the membrane lipid bilayer. May participate in the regulation of osmotic pressure changes within the cell. In Staphylococcus haemolyticus (strain JCSC1435), this protein is Large-conductance mechanosensitive channel.